A 1128-amino-acid chain; its full sequence is Major DNA-binding protein (1128 aa).

The segment at 1104-1128 (LGGGGQGSGGRRKRRLATVLPGLEV) is required for nuclear localization.

The protein belongs to the herpesviridae major DNA-binding protein family. In terms of assembly, homooligomers. Forms double-helical filaments necessary for the formation of replication compartments within the host nucleus. Interacts with the origin-binding protein. Interacts with the helicase primase complex; this interaction stimulates primer synthesis activity of the helicase-primase complex. Interacts with the DNA polymerase. Interacts with the alkaline exonuclease; this interaction increases its nuclease processivity.

Its subcellular location is the virion tegument. It localises to the host nucleus. Functionally, plays several crucial roles in viral infection. Participates in the opening of the viral DNA origin to initiate replication by interacting with the origin-binding protein. May disrupt loops, hairpins and other secondary structures present on ssDNA to reduce and eliminate pausing of viral DNA polymerase at specific sites during elongation. Promotes viral DNA recombination by performing strand-transfer, characterized by the ability to transfer a DNA strand from a linear duplex to a complementary single-stranded DNA circle. Can also catalyze the renaturation of complementary single strands. Additionally, reorganizes the host cell nucleus, leading to the formation of prereplicative sites and replication compartments. This process is driven by the protein which can form double-helical filaments in the absence of DNA. This Homo sapiens (Human) protein is Major DNA-binding protein.